The chain runs to 310 residues: Manganese ABC transporter substrate-binding lipoprotein scaA (310 aa).

Residues 1-19 (MKKCRFLVLLLLAFVGLAA) form the signal peptide. A lipid anchor (N-palmitoyl cysteine) is attached at C20. C20 carries the S-diacylglycerol cysteine lipid modification. 4 residues coordinate Mn(2+): H68, H140, E206, and D281.

Belongs to the bacterial solute-binding protein 9 family. Lipoprotein receptor antigen (Lrai) subfamily. The complex is composed of two ATP-binding proteins (ScaC), two transmembrane proteins (ScaB) and a solute-binding protein (ScaA).

The protein resides in the cell membrane. Functionally, part of ATP-binding cassette (ABC) transport system ScaABC involved in manganese import. Essential for growth under Mn(2+)-limiting conditions. Also acts as an adhesin which is involved on adherence to extracellular matrix. It is an important factor in pathogenesis and infection. The chain is Manganese ABC transporter substrate-binding lipoprotein scaA from Streptococcus gordonii.